Here is a 666-residue protein sequence, read N- to C-terminus: Calmodulin-binding receptor kinase CaMRLK (666 aa).

The signal sequence occupies residues 1–17 (MFLKLFLLLSLVSFSHS). Topologically, residues 18–297 (DSSSTVSCPN…KTHRTNHTPL (280 aa)) are extracellular. Residues N27, N45, N52, N68, N78, N89, N110, N126, N137, N148, N154, N189, N212, N229, and N261 are each glycosylated (N-linked (GlcNAc...) asparagine). LRR repeat units lie at residues 79-103 (LTRL…LWSM), 105-127 (GLVS…PVNG), 130-152 (LSAV…FTGF), 153-177 (TNLT…SLSG), 178-197 (LRHL…PISG), 198-224 (LKSL…NLNH), and 226-246 (QFLN…KYRK). The chain crosses the membrane as a helical span at residues 298 to 318 (VIGLSSSLGALIIVIFAAAII). Residues 319–337 (LIRRRMKSARTKSRWAISN) are calmodulin binding. At 319-666 (LIRRRMKSAR…LLKDIRTVSR (348 aa)) the chain is on the cytoplasmic side. Residues 395–661 (FGTESVISDG…QQVLGLLKDI (267 aa)) enclose the Protein kinase domain. Residues 401-409 (ISDGTCGPL) and K423 each bind ATP.

It belongs to the protein kinase superfamily. Ser/Thr protein kinase family. As to quaternary structure, binds calmodulin (CaM) in a calcium-dependent manner. Interacts with CAM1, but not with CAM8. The cofactor is Mn(2+). Mg(2+) is required as a cofactor. Calmodulin (CaM)-independent autophosphorylation. In terms of tissue distribution, expressed in reproductive and vegetative tissues, with higher levels in seedlings and flowers, but not in leaves.

The protein localises to the cell membrane. The catalysed reaction is L-seryl-[protein] + ATP = O-phospho-L-seryl-[protein] + ADP + H(+). It carries out the reaction L-threonyl-[protein] + ATP = O-phospho-L-threonyl-[protein] + ADP + H(+). Its activity is regulated as follows. Not stimulated by calmodulin (CaM). Functionally, can phosphorylate the myelin basic protein in vitro. Required for endosperm development in embryos. Maybe involved in auxin and osmotic stress responses. The protein is Calmodulin-binding receptor kinase CaMRLK of Arabidopsis thaliana (Mouse-ear cress).